A 287-amino-acid polypeptide reads, in one-letter code: Thioredoxin-related transmembrane protein 2 (287 aa).

Residues 1–13 (MAVLAPLLAVLYA) form the signal peptide. At 14–112 (APGLLRWVSQ…ILFFRLDLRM (99 aa)) the chain is on the extracellular side. A helical membrane pass occupies residues 113-133 (GLLYITLCIVFLMTCKPPLYL). Topologically, residues 134 to 287 (GPEHIKYFSD…NEWNDGKKDQ (154 aa)) are cytoplasmic. The region spanning 137–209 (HIKYFSDKTL…PEVSCRYSIS (73 aa)) is the Thioredoxin domain. A Di-lysine motif motif is present at residues 284 to 287 (KKDQ).

Monomer. Homodimer; disulfide-linked. Occurs in both reduced and oxidized monomeric form. Oxidative conditions increase homodimerization.

The protein localises to the endoplasmic reticulum membrane. Its subcellular location is the mitochondrion membrane. Its function is as follows. Endoplasmic reticulum and mitochondria-associated protein that probably functions as a regulator of cellular redox state and thereby regulates protein post-translational modification, protein folding and mitochondrial activity. In Xenopus laevis (African clawed frog), this protein is Thioredoxin-related transmembrane protein 2 (tmx2).